A 275-amino-acid polypeptide reads, in one-letter code: Release factor glutamine methyltransferase (275 aa).

S-adenosyl-L-methionine-binding positions include 117 to 121 (GTGSG), Asp140, Trp168, and Asn182. 182-185 (NPPY) serves as a coordination point for substrate.

The protein belongs to the protein N5-glutamine methyltransferase family. PrmC subfamily.

The catalysed reaction is L-glutaminyl-[peptide chain release factor] + S-adenosyl-L-methionine = N(5)-methyl-L-glutaminyl-[peptide chain release factor] + S-adenosyl-L-homocysteine + H(+). Its function is as follows. Methylates the class 1 translation termination release factors RF1/PrfA and RF2/PrfB on the glutamine residue of the universally conserved GGQ motif. The sequence is that of Release factor glutamine methyltransferase from Buchnera aphidicola subsp. Schizaphis graminum (strain Sg).